We begin with the raw amino-acid sequence, 133 residues long: ATP synthase epsilon chain (133 aa).

It belongs to the ATPase epsilon chain family. F-type ATPases have 2 components, CF(1) - the catalytic core - and CF(0) - the membrane proton channel. CF(1) has five subunits: alpha(3), beta(3), gamma(1), delta(1), epsilon(1). CF(0) has three main subunits: a, b and c.

The protein localises to the cell membrane. Functionally, produces ATP from ADP in the presence of a proton gradient across the membrane. The chain is ATP synthase epsilon chain from Clostridium perfringens (strain ATCC 13124 / DSM 756 / JCM 1290 / NCIMB 6125 / NCTC 8237 / Type A).